The sequence spans 65 residues: DNA-binding protein 7e (65 aa).

N6-methyllysine is present on Lys-7. N6-methyllysine; partial occurs at positions 63 and 64.

It belongs to the 7 kDa DNA-binding/endoribonuclease P2 family. As to quaternary structure, monomer. Post-translationally, lys-63 was found to be 25% monomethylated and Lys-64 was found to be 36% monomethylated.

The protein resides in the cytoplasm. Can constrain negative DNA supercoils. May be involved in maintaining the integrity of the genome at high temperature. This is DNA-binding protein 7e from Sulfolobus acidocaldarius (strain ATCC 33909 / DSM 639 / JCM 8929 / NBRC 15157 / NCIMB 11770).